The following is a 552-amino-acid chain: Gamma-aminobutyric acid receptor subunit alpha-4 (552 aa).

Positions 1–35 (MVSVQKVPAIVLCSGVSLALLHVLCLATCLNESPG) are cleaved as a signal peptide. The Extracellular portion of the chain corresponds to 36–259 (QNSKDEKLCP…FHLRRKMGYF (224 aa)). Asn47 carries N-linked (GlcNAc...) asparagine glycosylation. Arg100 is a 4-aminobutanoate binding site. N-linked (GlcNAc...) asparagine glycosylation is found at Asn144 and Asn157. Residue Thr163 coordinates 4-aminobutanoate. A disulfide bond links Cys172 and Cys186. Residues 260 to 280 (MIQTYIPCIMTVILSQVSFWI) traverse the membrane as a helical segment. Residues 281–284 (NKES) are Cytoplasmic-facing. The helical transmembrane segment at 285–305 (VPARTVFGITTVLTMTTLSIS) threads the bilayer. Residues 306–318 (ARHSLPKVSYATA) are Extracellular-facing. The chain crosses the membrane as a helical span at residues 319 to 341 (MDWFIAVCFAFVFSALIEFAAVN). Topologically, residues 342–515 (YFTNIQMQKA…PPPSGSGTSK (174 aa)) are cytoplasmic. Disordered stretches follow at residues 353-436 (KKIS…NPFS), 448-470 (ARGL…PLRS), and 486-513 (TTVN…GSGT). Residues 403-423 (RTEVGNHSSKTTAAQESSETT) show a composition bias toward polar residues. Composition is skewed to low complexity over residues 448-458 (ARGLSSAASPS) and 486-499 (TTVN…NVSA). Residues 500–509 (TPPPSAPPPS) show a composition bias toward pro residues. A helical transmembrane segment spans residues 516 to 538 (IDKYARILFPVTFGAFNMVYWVV). The Extracellular segment spans residues 539 to 552 (YLSKDTMEKSESLM).

This sequence belongs to the ligand-gated ion channel (TC 1.A.9) family. Gamma-aminobutyric acid receptor (TC 1.A.9.5) subfamily. GABRA4 sub-subfamily. Heteropentamer, formed by a combination of alpha (GABRA1-6), beta (GABRB1-3), gamma (GABRG1-3), delta (GABRD), epsilon (GABRE), rho (GABRR1-3), pi (GABRP) and theta (GABRQ) chains, each subunit exhibiting distinct physiological and pharmacological properties. As to expression, expressed in the brain.

It is found in the cell membrane. Its subcellular location is the postsynaptic cell membrane. Its activity is regulated as follows. Potentiated by histamine. Alpha subunit of the heteropentameric ligand-gated chloride channel gated by gamma-aminobutyric acid (GABA), a major inhibitory neurotransmitter in the brain. GABA-gated chloride channels, also named GABA(A) receptors (GABAAR), consist of five subunits arranged around a central pore and contain GABA active binding site(s) located at the alpha and beta subunit interface(s). Alpha-4/GABRA4 subunit often assembles with delta or gamma-2 subunits, in combination with beta subunits. When activated by GABA, GABAARs selectively allow the flow of chloride anions across the cell membrane down their electrochemical gradient. GABAARs containing alpha-4 are predominantly extrasynaptic, contributing to tonic inhibition in dentate granule cells and thalamic relay neurons. Extrasynaptic alpha-4-containing GABAARs control levels of excitability and network activity. GABAAR containing alpha-4-beta-3-delta subunits can simultaneously bind GABA and histamine where histamine binds at the interface of two neighboring beta subunits, which may be involved in the regulation of sleep and wakefulness. The polypeptide is Gamma-aminobutyric acid receptor subunit alpha-4 (Rattus norvegicus (Rat)).